The following is a 134-amino-acid chain: Phosphoribosyl-AMP cyclohydrolase (134 aa).

D80 is a binding site for Mg(2+). C81 is a Zn(2+) binding site. Mg(2+) contacts are provided by D82 and D84. 2 residues coordinate Zn(2+): C98 and C105.

The protein belongs to the PRA-CH family. In terms of assembly, homodimer. Mg(2+) is required as a cofactor. Requires Zn(2+) as cofactor.

It localises to the cytoplasm. The enzyme catalyses 1-(5-phospho-beta-D-ribosyl)-5'-AMP + H2O = 1-(5-phospho-beta-D-ribosyl)-5-[(5-phospho-beta-D-ribosylamino)methylideneamino]imidazole-4-carboxamide. It functions in the pathway amino-acid biosynthesis; L-histidine biosynthesis; L-histidine from 5-phospho-alpha-D-ribose 1-diphosphate: step 3/9. In terms of biological role, catalyzes the hydrolysis of the adenine ring of phosphoribosyl-AMP. In Herminiimonas arsenicoxydans, this protein is Phosphoribosyl-AMP cyclohydrolase.